The sequence spans 401 residues: Argininosuccinate synthase (401 aa).

9-17 (AYSGGLDTS) is a binding site for ATP. Y87 provides a ligand contact to L-citrulline. Residue G117 coordinates ATP. L-aspartate is bound by residues T119, N123, and D124. L-citrulline is bound at residue N123. Residues R127, S176, S185, E261, and Y273 each coordinate L-citrulline.

Belongs to the argininosuccinate synthase family. Type 1 subfamily. In terms of assembly, homotetramer.

The protein localises to the cytoplasm. It carries out the reaction L-citrulline + L-aspartate + ATP = 2-(N(omega)-L-arginino)succinate + AMP + diphosphate + H(+). It functions in the pathway amino-acid biosynthesis; L-arginine biosynthesis; L-arginine from L-ornithine and carbamoyl phosphate: step 2/3. The protein is Argininosuccinate synthase of Prosthecochloris aestuarii (strain DSM 271 / SK 413).